A 455-amino-acid chain; its full sequence is Protein king tubby (455 aa).

Residues 35–92 form a disordered region; that stretch reads RPMSGMRGNSRELHAYDGPMQFIGSPHNPDQILSNNSSSVHLSSSMNSSRNNSNNLRS. The span at 67 to 92 shows a compositional bias: low complexity; that stretch reads LSNNSSSVHLSSSMNSSRNNSNNLRS. Serine 144 carries the phosphoserine modification.

The protein belongs to the TUB family.

It is found in the cytoplasm. The protein localises to the nucleus. It localises to the cell projection. The protein resides in the cilium membrane. Its subcellular location is the rhabdomere. The sequence is that of Protein king tubby from Drosophila virilis (Fruit fly).